The sequence spans 565 residues: O-fucosyltransferase 7 (565 aa).

A helical; Signal-anchor for type II membrane protein membrane pass occupies residues 17–37 (VLIWAICVMTLLCFLTVHIYV). Residues asparagine 62, asparagine 73, asparagine 104, asparagine 124, and asparagine 190 are each glycosylated (N-linked (GlcNAc...) asparagine). 327-329 (HLR) provides a ligand contact to substrate. A glycan (N-linked (GlcNAc...) asparagine) is linked at asparagine 441. Residues 515 to 565 (NEIHKTRQGSPRRRKGPASGTKGLERHRSEESFYENPLPDCLCQRDPSKAR) are disordered. A compositionally biased stretch (basic residues) spans 520–530 (TRQGSPRRRKG).

It belongs to the glycosyltransferase GT106 family.

The protein resides in the membrane. Its pathway is glycan metabolism. This Arabidopsis thaliana (Mouse-ear cress) protein is O-fucosyltransferase 7.